A 113-amino-acid chain; its full sequence is UPF0212 protein AF_0282 (113 aa).

Belongs to the UPF0212 family.

This Archaeoglobus fulgidus (strain ATCC 49558 / DSM 4304 / JCM 9628 / NBRC 100126 / VC-16) protein is UPF0212 protein AF_0282.